Reading from the N-terminus, the 145-residue chain is Large ribosomal subunit protein uL15 (145 aa).

A compositionally biased stretch (basic residues) spans 1-13 (MIRSKRKINKLRG). Positions 1–44 (MIRSKRKINKLRGSRSNGGGCTKKRRGAGNKGGRGNAGASKQHW) are disordered.

Belongs to the universal ribosomal protein uL15 family. As to quaternary structure, part of the 50S ribosomal subunit.

Its function is as follows. Binds to the 23S rRNA. This Methanobrevibacter smithii (strain ATCC 35061 / DSM 861 / OCM 144 / PS) protein is Large ribosomal subunit protein uL15.